The primary structure comprises 567 residues: Unguisins hydrolase ungD (567 aa).

This sequence belongs to the peptidase S12 family.

It participates in secondary metabolite biosynthesis. Hydrolase; part of the gene cluster that mediates the biosynthesis of the unguisins, gamma-aminobutyric acid (GABA)-containing fungal cyclic heptapeptides with the amino acid sequence cyclo-(D-Ala1-D-Val2-L-Phe3-D-Val4-D-Ala5-D-Trp6-GABA7) for unguisin A and cyclo-(D-Ala1-D-Val2-L-Leu3-D-Val4-D-Ala5-D-Trp6-GABA7) for unguisin B. Within the pathway, the hydrolase ungD catalyzes the hydrolysis between the D-tryptophan and GABA residues of unguisins A and B to produce the corresponding linear peptides. The alanine racemase ungC catalyzes the interconversion of L-alanine and D-alanine, providing the D-alanine which is accepted by the first adenylation domain of the nonribosomal peptide synthetase (NRPS) ungA. UngA is the main enzyme within the cluster which condenses the 7 residues using its respective 7 modules. The terminal condensation domain (Ct) is involved in cyclization with D-alanine and thereby releasing of unguisins A and B. The sequence is that of Unguisins hydrolase ungD from Aspergillus violaceofuscus (strain CBS 115571).